We begin with the raw amino-acid sequence, 197 residues long: dITP/XTP pyrophosphatase (197 aa).

Substrate is bound at residue 8-13 (TGNPGK). Mg(2+) contacts are provided by E40 and D69. The active-site Proton acceptor is the D69. Residues S70, 154-157 (FGYD), K177, and 182-183 (HR) contribute to the substrate site.

The protein belongs to the HAM1 NTPase family. In terms of assembly, homodimer. It depends on Mg(2+) as a cofactor.

It catalyses the reaction XTP + H2O = XMP + diphosphate + H(+). The enzyme catalyses dITP + H2O = dIMP + diphosphate + H(+). It carries out the reaction ITP + H2O = IMP + diphosphate + H(+). Pyrophosphatase that catalyzes the hydrolysis of nucleoside triphosphates to their monophosphate derivatives, with a high preference for the non-canonical purine nucleotides XTP (xanthosine triphosphate), dITP (deoxyinosine triphosphate) and ITP. Seems to function as a house-cleaning enzyme that removes non-canonical purine nucleotides from the nucleotide pool, thus preventing their incorporation into DNA/RNA and avoiding chromosomal lesions. In Photorhabdus laumondii subsp. laumondii (strain DSM 15139 / CIP 105565 / TT01) (Photorhabdus luminescens subsp. laumondii), this protein is dITP/XTP pyrophosphatase.